Reading from the N-terminus, the 322-residue chain is Mitochondrial uncoupling protein 4 (322 aa).

3 Solcar repeats span residues 20-114, 124-216, and 225-316; these read SKFL…LREV, YPLW…VKHY, and DNIS…IREM. Helical transmembrane passes span 22-39, 87-108, 126-143, 194-211, 228-247, and 287-310; these read FLLSGCAATVAELATFPL, WQGVTPAIYRHVVYSGGRMVTY, LWKSVIGGMMAGVIGQFL, PNIQRAALVNMGDLTTYD, STHGLSSLCSGLVASILGTP, and SLYKGFLPSWLRMTPWSMVFWLTY.

Belongs to the mitochondrial carrier (TC 2.A.29) family. As to quaternary structure, homotetramer.

It localises to the mitochondrion inner membrane. It is found in the cell projection. The protein resides in the neuron projection. It carries out the reaction H(+)(in) = H(+)(out). The enzyme catalyses chloride(in) = chloride(out). Facilitates proton transport across the inner mitochondrial membrane and may dissipate excessive proton gradient associated with oxidative and metabolic stress at neuronal synapses. Regulates glutamate-induced proton conductance in astrocytes, shifting the energy metabolism toward aerobic glycolysis and lactate transfer to neurons for ATP synthesis. Can transport chloride ions with lower efficiency. The transport mechanism remains to be elucidated. The sequence is that of Mitochondrial uncoupling protein 4 from Mus musculus (Mouse).